Consider the following 303-residue polypeptide: Acetyl-coenzyme A carboxylase carboxyl transferase subunit beta (303 aa).

The 270-residue stretch at 29-298 folds into the CoA carboxyltransferase N-terminal domain; sequence LWVKCPETGQ…ATPAPASAAA (270 aa).

Belongs to the AccD/PCCB family. In terms of assembly, acetyl-CoA carboxylase is a heterohexamer composed of biotin carboxyl carrier protein (AccB), biotin carboxylase (AccC) and two subunits each of ACCase subunit alpha (AccA) and ACCase subunit beta (AccD).

It is found in the cytoplasm. It catalyses the reaction N(6)-carboxybiotinyl-L-lysyl-[protein] + acetyl-CoA = N(6)-biotinyl-L-lysyl-[protein] + malonyl-CoA. It functions in the pathway lipid metabolism; malonyl-CoA biosynthesis; malonyl-CoA from acetyl-CoA: step 1/1. Its function is as follows. Component of the acetyl coenzyme A carboxylase (ACC) complex. Biotin carboxylase (BC) catalyzes the carboxylation of biotin on its carrier protein (BCCP) and then the CO(2) group is transferred by the transcarboxylase to acetyl-CoA to form malonyl-CoA. In Methylobacterium sp. (strain 4-46), this protein is Acetyl-coenzyme A carboxylase carboxyl transferase subunit beta.